A 619-amino-acid polypeptide reads, in one-letter code: Putative zinc metalloprotease CT_072 (619 aa).

Histidine 20 is a binding site for Zn(2+). Glutamate 21 is an active-site residue. Zn(2+) is bound at residue histidine 24. 3 consecutive transmembrane segments (helical) span residues 103–125 (IFVL…GILY), 558–580 (VLNL…WEIL), and 593–610 (ALVP…FLTL).

It belongs to the peptidase M50B family. It depends on Zn(2+) as a cofactor.

The protein localises to the cell inner membrane. The protein is Putative zinc metalloprotease CT_072 of Chlamydia trachomatis serovar D (strain ATCC VR-885 / DSM 19411 / UW-3/Cx).